Reading from the N-terminus, the 75-residue chain is UPF0346 protein LSL_0716 (75 aa).

This sequence belongs to the UPF0346 family.

This Ligilactobacillus salivarius (strain UCC118) (Lactobacillus salivarius) protein is UPF0346 protein LSL_0716.